Reading from the N-terminus, the 287-residue chain is MAGAKEIRSKIASIKSTQKITSAMEKVAVSKMRKAQQRMAAGRPYAERIRQVIGHLAKANPEYRHSFMVERDVKRVGYIVVTSDRGLCGGLNINLFKALLKSLKEWRDQKVEADFCVVGTKGASFFRSNGGNVVAAISKLGEEPSINDLIGSVKVVLDAYAEGRIDRLYLVSNKFVNTMTQKPEVQQLLPLAASDAQGVQKGLWDYVYEPDAQQLLDALLVRYIESQVYQSVVENSACEQAARMIAMKNATDNAGDLIKDLQLVYNKARQAAITQEISEIVGGAAAV.

This sequence belongs to the ATPase gamma chain family. In terms of assembly, F-type ATPases have 2 components, CF(1) - the catalytic core - and CF(0) - the membrane proton channel. CF(1) has five subunits: alpha(3), beta(3), gamma(1), delta(1), epsilon(1). CF(0) has three main subunits: a, b and c.

The protein resides in the cell inner membrane. Its function is as follows. Produces ATP from ADP in the presence of a proton gradient across the membrane. The gamma chain is believed to be important in regulating ATPase activity and the flow of protons through the CF(0) complex. In Ectopseudomonas mendocina (strain ymp) (Pseudomonas mendocina), this protein is ATP synthase gamma chain.